A 530-amino-acid polypeptide reads, in one-letter code: Probable serine/threonine-protein kinase fnkB (530 aa).

The Protein kinase domain occupies 11-268; sequence WEIVETLKSN…SITLIDHPFL (258 aa). ATP contacts are provided by residues 17–25 and Lys43; that span reads LKSNVFKVN. The active-site Proton acceptor is the Asp131.

This sequence belongs to the protein kinase superfamily. STE Ser/Thr protein kinase family. It depends on Mg(2+) as a cofactor.

It carries out the reaction L-seryl-[protein] + ATP = O-phospho-L-seryl-[protein] + ADP + H(+). The enzyme catalyses L-threonyl-[protein] + ATP = O-phospho-L-threonyl-[protein] + ADP + H(+). The chain is Probable serine/threonine-protein kinase fnkB from Dictyostelium discoideum (Social amoeba).